The sequence spans 130 residues: Leptin receptor gene-related protein (130 aa).

Helical transmembrane passes span 7–27, 32–52, 68–88, and 99–119; these read LVAL…GCAL, QYWP…NLIA, LAYF…VVLA, and GLVM…FLIF.

It belongs to the OB-RGRP/VPS55 family.

The protein localises to the golgi apparatus membrane. The protein resides in the endosome membrane. Its function is as follows. Involved in protein trafficking. May be involved in the down-regulation of membrane protein levels. The polypeptide is Leptin receptor gene-related protein (leprot) (Danio rerio (Zebrafish)).